The following is a 502-amino-acid chain: ATP synthase subunit alpha (502 aa).

169-176 is an ATP binding site; it reads GDKQTGKT.

It belongs to the ATPase alpha/beta chains family. As to quaternary structure, F-type ATPases have 2 components, CF(1) - the catalytic core - and CF(0) - the membrane proton channel. CF(1) has five subunits: alpha(3), beta(3), gamma(1), delta(1), epsilon(1). CF(0) has three main subunits: a(1), b(2) and c(9-12). The alpha and beta chains form an alternating ring which encloses part of the gamma chain. CF(1) is attached to CF(0) by a central stalk formed by the gamma and epsilon chains, while a peripheral stalk is formed by the delta and b chains.

The protein resides in the cell membrane. It carries out the reaction ATP + H2O + 4 H(+)(in) = ADP + phosphate + 5 H(+)(out). In terms of biological role, produces ATP from ADP in the presence of a proton gradient across the membrane. The alpha chain is a regulatory subunit. The chain is ATP synthase subunit alpha from Lachnoclostridium phytofermentans (strain ATCC 700394 / DSM 18823 / ISDg) (Clostridium phytofermentans).